The chain runs to 200 residues: HTH-type transcriptional regulator BetI (200 aa).

Positions 8–68 constitute an HTH tetR-type domain; sequence SIRKQQLIQA…AAMRHIQYQL (61 aa). The H-T-H motif DNA-binding region spans 31 to 50; sequence SIALIARKAGVSNGIISHYF.

It functions in the pathway amine and polyamine biosynthesis; betaine biosynthesis via choline pathway [regulation]. Repressor involved in the biosynthesis of the osmoprotectant glycine betaine. It represses transcription of the choline transporter BetT and the genes of BetAB involved in the synthesis of glycine betaine. In Proteus mirabilis (strain HI4320), this protein is HTH-type transcriptional regulator BetI.